Consider the following 1486-residue polypeptide: Chromosome partition protein MukB (1486 aa).

G34 to S41 contacts ATP. 3 coiled-coil regions span residues L326–Q418, L444–Q480, and R509–V603. Residues P666–R783 are flexible hinge. 3 coiled-coil regions span residues E835–E923, E977–A1115, and V1209–S1266.

It belongs to the SMC family. MukB subfamily. As to quaternary structure, homodimerization via its hinge domain. Binds to DNA via its C-terminal region. Interacts, and probably forms a ternary complex, with MukE and MukF via its C-terminal region. The complex formation is stimulated by calcium or magnesium. Interacts with tubulin-related protein FtsZ.

It localises to the cytoplasm. It is found in the nucleoid. Functionally, plays a central role in chromosome condensation, segregation and cell cycle progression. Functions as a homodimer, which is essential for chromosome partition. Involved in negative DNA supercoiling in vivo, and by this means organize and compact chromosomes. May achieve or facilitate chromosome segregation by condensation DNA from both sides of a centrally located replisome during cell division. The chain is Chromosome partition protein MukB from Escherichia coli O9:H4 (strain HS).